A 291-amino-acid chain; its full sequence is 3-hydroxy-5-phosphonooxypentane-2,4-dione thiolase (291 aa).

Lys-203 functions as the Schiff-base intermediate with substrate in the catalytic mechanism.

The protein belongs to the DeoC/FbaB aldolase family. As to quaternary structure, homodecamer.

The protein localises to the cytoplasm. It catalyses the reaction dihydroxyacetone phosphate + acetyl-CoA = 3-hydroxy-2,4-dioxopentyl phosphate + CoA. Functionally, involved in the degradation of phospho-AI-2, thereby terminating induction of the lsr operon and closing the AI-2 signaling cycle. Catalyzes the transfer of an acetyl moiety from 3-hydroxy-5-phosphonooxypentane-2,4-dione to CoA to form glycerone phosphate and acetyl-CoA. The protein is 3-hydroxy-5-phosphonooxypentane-2,4-dione thiolase of Yersinia enterocolitica serotype O:8 / biotype 1B (strain NCTC 13174 / 8081).